A 107-amino-acid chain; its full sequence is MVNFNQFLKQAQSMQKKMQEAQEQMANTRYTGKAGGMLVEIIITGKGEVEKISIDESLLKTEEKEMLEDLIKVAFNDAKQKCDEDSQNSLSGALNGMSLPPGFKIPF.

It belongs to the YbaB/EbfC family. In terms of assembly, homodimer.

Its subcellular location is the cytoplasm. It is found in the nucleoid. Its function is as follows. Binds to DNA and alters its conformation. May be involved in regulation of gene expression, nucleoid organization and DNA protection. In Rickettsia prowazekii (strain Madrid E), this protein is Nucleoid-associated protein RP866.